The chain runs to 29 residues: NADP phosphatase 1 (29 aa).

Homodimer.

It is found in the cytoplasm. This is NADP phosphatase 1 from Arthrobacter sp. (strain KM).